A 414-amino-acid polypeptide reads, in one-letter code: Glutamyl-tRNA reductase (414 aa).

Substrate is bound by residues Thr-49–Arg-52, Ser-108, Glu-113–Gln-115, and Gln-119. Catalysis depends on Cys-50, which acts as the Nucleophile. Residue Gly-188–Gly-193 participates in NADP(+) binding.

It belongs to the glutamyl-tRNA reductase family. Homodimer.

The enzyme catalyses (S)-4-amino-5-oxopentanoate + tRNA(Glu) + NADP(+) = L-glutamyl-tRNA(Glu) + NADPH + H(+). It participates in porphyrin-containing compound metabolism; protoporphyrin-IX biosynthesis; 5-aminolevulinate from L-glutamyl-tRNA(Glu): step 1/2. Functionally, catalyzes the NADPH-dependent reduction of glutamyl-tRNA(Glu) to glutamate 1-semialdehyde (GSA). This Francisella philomiragia subsp. philomiragia (strain ATCC 25017 / CCUG 19701 / FSC 153 / O#319-036) protein is Glutamyl-tRNA reductase.